A 297-amino-acid polypeptide reads, in one-letter code: Large ribosomal subunit protein uL18 (297 aa).

N-acetylglycine is present on G2. Residues K5 and K48 each carry the N6-acetyllysine modification. Phosphoserine is present on S185. K220 is subject to N6-acetyllysine; alternate. K220 participates in a covalent cross-link: Glycyl lysine isopeptide (Lys-Gly) (interchain with G-Cter in SUMO1); alternate. K220 participates in a covalent cross-link: Glycyl lysine isopeptide (Lys-Gly) (interchain with G-Cter in SUMO2); alternate. At T232 the chain carries Phosphothreonine. The disordered stretch occupies residues 253 to 297 (YEKKPKKEVKKKRWNRPKMSLAQKKDRVAQKKASFLRAQERAAES). Over residues 258-268 (KKEVKKKRWNR) the composition is skewed to basic residues. S272 bears the Phosphoserine mark.

The protein belongs to the universal ribosomal protein uL18 family. As to quaternary structure, component of the large ribosomal subunit (LSU). Part of the 5S RNP complex, which is a LSU subcomplex composed of the 5S RNA, RPL5 and RPL11. Component of a hexameric 5S RNP precursor complex, composed of 5S RNA, RRS1, RPF2/BXDC1, RPL5, RPL11 and HEATR3; this complex acts as a precursor for ribosome assembly. Interacts with isoform 1 of NVL in an ATP-dependent manner. Interacts with RRP1B. Interacts with IPO5, IPO7 and KPNB1; these interactions may be involved in RPL5 nuclear import for the assembly of ribosomal subunits.

It localises to the cytoplasm. It is found in the nucleus. Its subcellular location is the nucleolus. Component of the ribosome, a large ribonucleoprotein complex responsible for the synthesis of proteins in the cell. The small ribosomal subunit (SSU) binds messenger RNAs (mRNAs) and translates the encoded message by selecting cognate aminoacyl-transfer RNA (tRNA) molecules. The large subunit (LSU) contains the ribosomal catalytic site termed the peptidyl transferase center (PTC), which catalyzes the formation of peptide bonds, thereby polymerizing the amino acids delivered by tRNAs into a polypeptide chain. The nascent polypeptides leave the ribosome through a tunnel in the LSU and interact with protein factors that function in enzymatic processing, targeting, and the membrane insertion of nascent chains at the exit of the ribosomal tunnel. As part of the 5S RNP/5S ribonucleoprotein particle it is an essential component of the LSU, required for its formation and the maturation of rRNAs. It also couples ribosome biogenesis to p53/TP53 activation. As part of the 5S RNP it accumulates in the nucleoplasm and inhibits MDM2, when ribosome biogenesis is perturbed, mediating the stabilization and the activation of TP53. The sequence is that of Large ribosomal subunit protein uL18 (RPL5) from Homo sapiens (Human).